The primary structure comprises 144 residues: Large ribosomal subunit protein uL16 (144 aa).

Residues 1–19 (MLLPKRVKYRRQHRPKTTG) show a composition bias toward basic residues. The disordered stretch occupies residues 1–23 (MLLPKRVKYRRQHRPKTTGRSKG).

Belongs to the universal ribosomal protein uL16 family. In terms of assembly, part of the 50S ribosomal subunit.

Binds 23S rRNA and is also seen to make contacts with the A and possibly P site tRNAs. The protein is Large ribosomal subunit protein uL16 of Staphylococcus carnosus (strain TM300).